We begin with the raw amino-acid sequence, 176 residues long: Inner membrane-spanning protein YciB (176 aa).

A run of 6 helical transmembrane segments spans residues Phe3–Phe23, Thr24–His44, Thr49–His69, Leu81–Ile101, Val121–Phe141, and Phe149–Leu169.

It belongs to the YciB family.

The protein localises to the cell inner membrane. Plays a role in cell envelope biogenesis, maintenance of cell envelope integrity and membrane homeostasis. This is Inner membrane-spanning protein YciB from Burkholderia vietnamiensis (strain G4 / LMG 22486) (Burkholderia cepacia (strain R1808)).